A 117-amino-acid chain; its full sequence is Large ribosomal subunit protein bL20c (117 aa).

Belongs to the bacterial ribosomal protein bL20 family.

Its subcellular location is the plastid. The protein localises to the chloroplast. Binds directly to 23S ribosomal RNA and is necessary for the in vitro assembly process of the 50S ribosomal subunit. It is not involved in the protein synthesizing functions of that subunit. The chain is Large ribosomal subunit protein bL20c from Citrus sinensis (Sweet orange).